Here is a 292-residue protein sequence, read N- to C-terminus: UPF0725 protein At4g28920 (292 aa).

A compositionally biased stretch (acidic residues) spans 1–17 (MSENDSSESDIEMDPEE). The segment at 1 to 24 (MSENDSSESDIEMDPEEEKVYRRQ) is disordered.

The protein belongs to the UPF0725 (EMB2204) family.

The chain is UPF0725 protein At4g28920 from Arabidopsis thaliana (Mouse-ear cress).